We begin with the raw amino-acid sequence, 557 residues long: Formate--tetrahydrofolate ligase (557 aa).

Position 65 to 72 (65 to 72 (TPAGEGKT)) interacts with ATP.

Belongs to the formate--tetrahydrofolate ligase family.

The catalysed reaction is (6S)-5,6,7,8-tetrahydrofolate + formate + ATP = (6R)-10-formyltetrahydrofolate + ADP + phosphate. Its pathway is one-carbon metabolism; tetrahydrofolate interconversion. This chain is Formate--tetrahydrofolate ligase, found in Acidiphilium cryptum (strain JF-5).